Reading from the N-terminus, the 229-residue chain is Enolase-phosphatase E1 (229 aa).

The protein belongs to the HAD-like hydrolase superfamily. MasA/MtnC family. As to quaternary structure, monomer. The cofactor is Mg(2+).

It carries out the reaction 5-methylsulfanyl-2,3-dioxopentyl phosphate + H2O = 1,2-dihydroxy-5-(methylsulfanyl)pent-1-en-3-one + phosphate. It participates in amino-acid biosynthesis; L-methionine biosynthesis via salvage pathway; L-methionine from S-methyl-5-thio-alpha-D-ribose 1-phosphate: step 3/6. The protein operates within amino-acid biosynthesis; L-methionine biosynthesis via salvage pathway; L-methionine from S-methyl-5-thio-alpha-D-ribose 1-phosphate: step 4/6. Bifunctional enzyme that catalyzes the enolization of 2,3-diketo-5-methylthiopentyl-1-phosphate (DK-MTP-1-P) into the intermediate 2-hydroxy-3-keto-5-methylthiopentenyl-1-phosphate (HK-MTPenyl-1-P), which is then dephosphorylated to form the acireductone 1,2-dihydroxy-3-keto-5-methylthiopentene (DHK-MTPene). This Erwinia tasmaniensis (strain DSM 17950 / CFBP 7177 / CIP 109463 / NCPPB 4357 / Et1/99) protein is Enolase-phosphatase E1.